The chain runs to 357 residues: Queuosine-tRNA galactosyltransferase (357 aa).

Belongs to the glycosyltransferase 2 family.

It localises to the cytoplasm. It carries out the reaction queuosine(34) in tRNA(Tyr) + UDP-alpha-D-galactose = O-5''-beta-D-galactosylqueuosine(34) in tRNA(Tyr) + UDP + H(+). In terms of biological role, glycosyltransferase that specifically catalyzes galactosylation of cytoplasmic tRNA(Tyr) modified with queuosine at position 34 (queuosine(34)). Galactosylates the cyclopentene hydroxyl group of queuosine(34) in tRNA(Tyr) to form galactosyl-queuosine(34). Mannosylation of queuosine(34) in tRNA(Tyr) is required to slow-down elongation at cognate codons UAC and suppress stop codon readthrough, thereby regulating protein translation. This Mus musculus (Mouse) protein is Queuosine-tRNA galactosyltransferase.